Reading from the N-terminus, the 315-residue chain is Aspartate carbamoyltransferase catalytic subunit (315 aa).

Arg-61 and Thr-62 together coordinate carbamoyl phosphate. Lys-90 serves as a coordination point for L-aspartate. Carbamoyl phosphate is bound by residues Arg-111, His-139, and Gln-142. The L-aspartate site is built by Arg-172 and Arg-234. The carbamoyl phosphate site is built by Leu-274 and Pro-275.

The protein belongs to the aspartate/ornithine carbamoyltransferase superfamily. ATCase family. In terms of assembly, heterooligomer of catalytic and regulatory chains.

It carries out the reaction carbamoyl phosphate + L-aspartate = N-carbamoyl-L-aspartate + phosphate + H(+). The protein operates within pyrimidine metabolism; UMP biosynthesis via de novo pathway; (S)-dihydroorotate from bicarbonate: step 2/3. Its function is as follows. Catalyzes the condensation of carbamoyl phosphate and aspartate to form carbamoyl aspartate and inorganic phosphate, the committed step in the de novo pyrimidine nucleotide biosynthesis pathway. The sequence is that of Aspartate carbamoyltransferase catalytic subunit from Hyperthermus butylicus (strain DSM 5456 / JCM 9403 / PLM1-5).